A 185-amino-acid chain; its full sequence is Peptidyl-tRNA hydrolase (185 aa).

TRNA is bound at residue Tyr14. The active-site Proton acceptor is His19. TRNA-binding residues include Tyr65, Asn67, and Asn113.

It belongs to the PTH family. In terms of assembly, monomer.

It localises to the cytoplasm. The enzyme catalyses an N-acyl-L-alpha-aminoacyl-tRNA + H2O = an N-acyl-L-amino acid + a tRNA + H(+). Hydrolyzes ribosome-free peptidyl-tRNAs (with 1 or more amino acids incorporated), which drop off the ribosome during protein synthesis, or as a result of ribosome stalling. Functionally, catalyzes the release of premature peptidyl moieties from peptidyl-tRNA molecules trapped in stalled 50S ribosomal subunits, and thus maintains levels of free tRNAs and 50S ribosomes. The protein is Peptidyl-tRNA hydrolase of Rickettsia conorii (strain ATCC VR-613 / Malish 7).